Consider the following 660-residue polypeptide: Bifunctional polymyxin resistance protein ArnA (660 aa).

Residues 1-304 (MKAVIFAYHD…ALGLVKGALL (304 aa)) are formyltransferase ArnAFT. His-104 functions as the Proton donor; for formyltransferase activity in the catalytic mechanism. (6R)-10-formyltetrahydrofolate is bound by residues Arg-114 and 136–140 (TARAD). Positions 314-660 (RRTRVLILGV…QTVDLPDAAQ (347 aa)) are dehydrogenase ArnADH. Residues Asp-347 and 368–369 (DI) contribute to the NAD(+) site. UDP-alpha-D-glucuronate contacts are provided by residues Ala-393, Tyr-398, and 432-433 (TS). The Proton acceptor; for decarboxylase activity role is filled by Glu-434. Residues Arg-460, Asn-492, 526–535 (KLVDGGAQKR), and Tyr-613 contribute to the UDP-alpha-D-glucuronate site. Arg-619 (proton donor; for decarboxylase activity) is an active-site residue.

This sequence in the N-terminal section; belongs to the Fmt family. UDP-L-Ara4N formyltransferase subfamily. In the C-terminal section; belongs to the NAD(P)-dependent epimerase/dehydratase family. UDP-glucuronic acid decarboxylase subfamily. Homohexamer, formed by a dimer of trimers.

The enzyme catalyses UDP-alpha-D-glucuronate + NAD(+) = UDP-beta-L-threo-pentopyranos-4-ulose + CO2 + NADH. It carries out the reaction UDP-4-amino-4-deoxy-beta-L-arabinose + (6R)-10-formyltetrahydrofolate = UDP-4-deoxy-4-formamido-beta-L-arabinose + (6S)-5,6,7,8-tetrahydrofolate + H(+). It functions in the pathway nucleotide-sugar biosynthesis; UDP-4-deoxy-4-formamido-beta-L-arabinose biosynthesis; UDP-4-deoxy-4-formamido-beta-L-arabinose from UDP-alpha-D-glucuronate: step 1/3. Its pathway is nucleotide-sugar biosynthesis; UDP-4-deoxy-4-formamido-beta-L-arabinose biosynthesis; UDP-4-deoxy-4-formamido-beta-L-arabinose from UDP-alpha-D-glucuronate: step 3/3. It participates in bacterial outer membrane biogenesis; lipopolysaccharide biosynthesis. Its function is as follows. Bifunctional enzyme that catalyzes the oxidative decarboxylation of UDP-glucuronic acid (UDP-GlcUA) to UDP-4-keto-arabinose (UDP-Ara4O) and the addition of a formyl group to UDP-4-amino-4-deoxy-L-arabinose (UDP-L-Ara4N) to form UDP-L-4-formamido-arabinose (UDP-L-Ara4FN). The modified arabinose is attached to lipid A and is required for resistance to polymyxin and cationic antimicrobial peptides. The sequence is that of Bifunctional polymyxin resistance protein ArnA from Sodalis glossinidius (strain morsitans).